Consider the following 373-residue polypeptide: Dual-specificity RNA methyltransferase RlmN (373 aa).

Catalysis depends on E94, which acts as the Proton acceptor. The 240-residue stretch at 100 to 339 (EDDRATLCVS…VIVRKTRGDD (240 aa)) folds into the Radical SAM core domain. Cysteines 107 and 344 form a disulfide. [4Fe-4S] cluster contacts are provided by C114, C118, and C121. Residues 168 to 169 (GE), S200, 222 to 224 (SIH), and N301 each bind S-adenosyl-L-methionine. The S-methylcysteine intermediate role is filled by C344.

It belongs to the radical SAM superfamily. RlmN family. It depends on [4Fe-4S] cluster as a cofactor.

The protein resides in the cytoplasm. The catalysed reaction is adenosine(2503) in 23S rRNA + 2 reduced [2Fe-2S]-[ferredoxin] + 2 S-adenosyl-L-methionine = 2-methyladenosine(2503) in 23S rRNA + 5'-deoxyadenosine + L-methionine + 2 oxidized [2Fe-2S]-[ferredoxin] + S-adenosyl-L-homocysteine. It carries out the reaction adenosine(37) in tRNA + 2 reduced [2Fe-2S]-[ferredoxin] + 2 S-adenosyl-L-methionine = 2-methyladenosine(37) in tRNA + 5'-deoxyadenosine + L-methionine + 2 oxidized [2Fe-2S]-[ferredoxin] + S-adenosyl-L-homocysteine. In terms of biological role, specifically methylates position 2 of adenine 2503 in 23S rRNA and position 2 of adenine 37 in tRNAs. m2A2503 modification seems to play a crucial role in the proofreading step occurring at the peptidyl transferase center and thus would serve to optimize ribosomal fidelity. In Shewanella woodyi (strain ATCC 51908 / MS32), this protein is Dual-specificity RNA methyltransferase RlmN.